The primary structure comprises 381 residues: Cytochrome b (381 aa).

A run of 4 helical transmembrane segments spans residues 33-53, 77-98, 113-133, and 178-198; these read FGSLLGMCLIIQILTGLFLAM, WLLRNLHANGASMFFMCLFLHV, WNIGVILLLTVMATAFVGYVL, and FFAFHFILPFIIMALAVVHLL. Heme b contacts are provided by histidine 83 and histidine 97. Histidine 182 and histidine 196 together coordinate heme b. An a ubiquinone-binding site is contributed by histidine 201. 4 helical membrane-spanning segments follow: residues 226-246, 288-308, 320-340, and 347-367; these read IKDALGFMLLLLVLLLLALFS, LGGVLAVLASILILLIIPLLH, VSQTLFWILTANLITLTWIGG, and FIIIGQLAPMPYFLLILVMMP.

It belongs to the cytochrome b family. The cytochrome bc1 complex contains 11 subunits: 3 respiratory subunits (MT-CYB, CYC1 and UQCRFS1), 2 core proteins (UQCRC1 and UQCRC2) and 6 low-molecular weight proteins (UQCRH/QCR6, UQCRB/QCR7, UQCRQ/QCR8, UQCR10/QCR9, UQCR11/QCR10 and a cleavage product of UQCRFS1). This cytochrome bc1 complex then forms a dimer. Heme b serves as cofactor.

The protein resides in the mitochondrion inner membrane. Functionally, component of the ubiquinol-cytochrome c reductase complex (complex III or cytochrome b-c1 complex) that is part of the mitochondrial respiratory chain. The b-c1 complex mediates electron transfer from ubiquinol to cytochrome c. Contributes to the generation of a proton gradient across the mitochondrial membrane that is then used for ATP synthesis. The chain is Cytochrome b (MT-CYB) from Dasyurus hallucatus (Northern quoll).